The chain runs to 641 residues: Glycerol metabolism operon regulatory protein (641 aa).

Positions 1–318 are sensor domain; it reads MTTHTQDIGK…MRQLMTSQLG (318 aa). The region spanning 52 to 189 is the GAF domain; that stretch reads ALLTIAQAAL…AIAREVGNSL (138 aa). Positions 203 to 265 constitute a PAS domain; the sequence is NQMYGLLESM…MLLRRAIKHA (63 aa). The Sigma-54 factor interaction domain occupies 327 to 552; sequence MSTDDPETRR…LNSIIENIAI (226 aa). Residues 355–362 and 415–424 each bind ATP; these read GEEGVGKE and ANGGTLFLEK.

Transcriptional activator of the glycerol utilization dha operon. The sequence is that of Glycerol metabolism operon regulatory protein from Citrobacter freundii.